Here is a 471-residue protein sequence, read N- to C-terminus: Alpha-galactosidase 2 (471 aa).

The N-terminal stretch at 1 to 18 (MFAFYFLTACISLKGVFG) is a signal peptide. A disulfide bond links cysteine 42 and cysteine 74. 2 residues coordinate substrate: aspartate 72 and aspartate 73. Residue asparagine 105 is glycosylated (N-linked (GlcNAc...) asparagine). Cysteines 121 and 151 form a disulfide. Lysine 147 serves as a coordination point for substrate. Aspartate 149 serves as the catalytic Nucleophile. N-linked (GlcNAc...) asparagine glycosylation is present at asparagine 175. Residue arginine 205 coordinates substrate. Aspartate 209 serves as the catalytic Proton donor. Intrachain disulfides connect cysteine 221-cysteine 237 and cysteine 223-cysteine 230. Glutamine 251 lines the substrate pocket. Residues asparagine 270, asparagine 370, asparagine 403, asparagine 413, asparagine 422, asparagine 435, and asparagine 454 are each glycosylated (N-linked (GlcNAc...) asparagine).

Belongs to the glycosyl hydrolase 27 family. In terms of assembly, homotetramer.

It localises to the secreted. It catalyses the reaction Hydrolysis of terminal, non-reducing alpha-D-galactose residues in alpha-D-galactosides, including galactose oligosaccharides, galactomannans and galactolipids.. This chain is Alpha-galactosidase 2 (MEL2), found in Saccharomyces cerevisiae (Baker's yeast).